We begin with the raw amino-acid sequence, 230 residues long: Ureidoacrylate amidohydrolase RutB (230 aa).

The active-site Proton acceptor is aspartate 24. Residue lysine 133 is part of the active site. Residue cysteine 166 is the Nucleophile of the active site.

The protein belongs to the isochorismatase family. RutB subfamily.

The catalysed reaction is (Z)-3-ureidoacrylate + H2O + H(+) = (Z)-3-aminoacrylate + NH4(+) + CO2. It carries out the reaction (Z)-3-ureidoacrylate + H2O = (Z)-3-aminoacrylate + carbamate + H(+). The enzyme catalyses (Z)-2-methylureidoacrylate + H2O + H(+) = (Z)-2-methylaminoacrylate + NH4(+) + CO2. In terms of biological role, hydrolyzes ureidoacrylate to form aminoacrylate and carbamate. The carbamate hydrolyzes spontaneously, thereby releasing one of the nitrogen atoms of the pyrimidine ring as ammonia and one of its carbon atoms as CO2. In Escherichia coli O81 (strain ED1a), this protein is Ureidoacrylate amidohydrolase RutB.